The following is a 118-amino-acid chain: uncharacterized protein (118 aa).

This is an uncharacterized protein from Caenorhabditis elegans.